The chain runs to 214 residues: Large ribosomal subunit protein uL16 (214 aa).

Arg32 bears the Citrulline mark. Residue Lys175 forms a Glycyl lysine isopeptide (Lys-Gly) (interchain with G-Cter in SUMO2) linkage. A Glycyl lysine isopeptide (Lys-Gly) (interchain with G-Cter in ubiquitin) cross-link involves residue Lys188.

This sequence belongs to the universal ribosomal protein uL16 family. As to quaternary structure, component of the large ribosomal subunit. Mature ribosomes consist of a small (40S) and a large (60S) subunit. The 40S subunit contains about 33 different proteins and 1 molecule of RNA (18S). The 60S subunit contains about 49 different proteins and 3 molecules of RNA (28S, 5.8S and 5S). In terms of processing, citrullinated by PADI4. Ufmylated by UFL1.

The protein resides in the cytoplasm. Functionally, component of the large ribosomal subunit. Plays a role in the formation of actively translating ribosomes. May play a role in the embryonic brain development. The polypeptide is Large ribosomal subunit protein uL16 (Rattus norvegicus (Rat)).